The following is a 119-amino-acid chain: Aspartate 1-decarboxylase (119 aa).

The active-site Schiff-base intermediate with substrate; via pyruvic acid is the serine 25. Serine 25 carries the post-translational modification Pyruvic acid (Ser). Threonine 57 contributes to the substrate binding site. The Proton donor role is filled by tyrosine 58. Glycine 73–alanine 75 contributes to the substrate binding site.

It belongs to the PanD family. As to quaternary structure, heterooctamer of four alpha and four beta subunits. The cofactor is pyruvate. Is synthesized initially as an inactive proenzyme, which is activated by self-cleavage at a specific serine bond to produce a beta-subunit with a hydroxyl group at its C-terminus and an alpha-subunit with a pyruvoyl group at its N-terminus.

It is found in the cytoplasm. The enzyme catalyses L-aspartate + H(+) = beta-alanine + CO2. The protein operates within cofactor biosynthesis; (R)-pantothenate biosynthesis; beta-alanine from L-aspartate: step 1/1. In terms of biological role, catalyzes the pyruvoyl-dependent decarboxylation of aspartate to produce beta-alanine. This is Aspartate 1-decarboxylase from Thermosipho melanesiensis (strain DSM 12029 / CIP 104789 / BI429).